Here is a 444-residue protein sequence, read N- to C-terminus: MSNMTPKEIKHELDRHIIGQDNAKRAVAIALRNRWRRMQLDKEMRQEVTPKNILMIGPTGVGKTEIARRLAKLANAPFIKVEATKFTEVGYVGKEVESIVRDLVDVAIKLTREEEMAKVAHKAEDLAEDRILDILIPPAKTGNDWETVKTEDSATRQSFRKKLREGKLDDKEVEIDLPAPQIGVEIMAPPGMEEMTNQLQGMFQSMSGKDKTKKRKMKIKEALKVLIESEAAKLVNEEDIKEKALFSAENNGIIFIDEIDKICKRGDSAGPDVSREGVQRDLLPLIEGSTVSTKHGMVKTDHMLFIASGAFQVAKPSDLIPELQGRLPIRVELEALTEEDLAKILTEPKASLSEQYKALLATEGITLQFSKDGIDKIAKSAWHVNETTENIGARRLHTLMERILDELSYEASERKGESITIDENYVANTLDDLLENEDLSRYIL.

Residues Ile18, 60–65, Asp257, Glu322, and Arg394 each bind ATP; that span reads GVGKTE.

This sequence belongs to the ClpX chaperone family. HslU subfamily. As to quaternary structure, a double ring-shaped homohexamer of HslV is capped on each side by a ring-shaped HslU homohexamer. The assembly of the HslU/HslV complex is dependent on binding of ATP.

It is found in the cytoplasm. Its function is as follows. ATPase subunit of a proteasome-like degradation complex; this subunit has chaperone activity. The binding of ATP and its subsequent hydrolysis by HslU are essential for unfolding of protein substrates subsequently hydrolyzed by HslV. HslU recognizes the N-terminal part of its protein substrates and unfolds these before they are guided to HslV for hydrolysis. The chain is ATP-dependent protease ATPase subunit HslU from Psychromonas ingrahamii (strain DSM 17664 / CCUG 51855 / 37).